The sequence spans 1058 residues: Kinesin-like protein KIN-7M, chloroplastic (1058 aa).

A chloroplast-targeting transit peptide spans 1 to 60 (MASSSSRTRSRSPFSHRRPPSPYSSASSTSSSLINNRLLPRSSSTPTSTVYNSGGVTGSR). A disordered region spans residues 1-92 (MASSSSRTRS…QSYPSEGLIG (92 aa)). Residues 8–19 (TRSRSPFSHRRP) show a composition bias toward basic residues. A compositionally biased stretch (low complexity) spans 23 to 49 (YSSASSTSSSLINNRLLPRSSSTPTST). A compositionally biased stretch (polar residues) spans 50-70 (VYNSGGVTGSRSMSITRTISD). Residues 104 to 421 (SISVTVRFRP…LKFASRAKRI (318 aa)) form the Kinesin motor domain. An ATP-binding site is contributed by 184–191 (GVTSSGKT). The stretch at 422–509 (EINASRNKII…QKLTKLILVS (88 aa)) forms a coiled coil. The disordered stretch occupies residues 549–578 (PSSTLSLASDARRSSSKFKDENSPVGSRAE). Residues 558-570 (DARRSSSKFKDEN) show a composition bias toward basic and acidic residues. 4 coiled-coil regions span residues 621–658 (PENSKTQIQNLENDIQEKQRQMKSLEQRITESGEASIA), 704–826 (NNEL…AQKR), 873–904 (LEAALAEKEYIEEEFRKKAEEAKRREEALEND), and 935–999 (KEDE…SQAA). Residues 824 to 838 (QKRNNNSMNSAANRN) show a composition bias toward low complexity. A disordered region spans residues 824-847 (QKRNNNSMNSAANRNGTRPGRKAR). The tract at residues 922–946 (ALSIQKSDEAEPAKEDEVTELDNKN) is disordered. Over residues 927 to 946 (KSDEAEPAKEDEVTELDNKN) the composition is skewed to basic and acidic residues. Residues 1011-1046 (CKVCFESPTATILLPCRHFCLCKSCSLACSECPICR) form an RING-type zinc finger.

It belongs to the TRAFAC class myosin-kinesin ATPase superfamily. Kinesin family. KIN-7 subfamily.

It localises to the plastid. The protein resides in the chloroplast. This chain is Kinesin-like protein KIN-7M, chloroplastic, found in Arabidopsis thaliana (Mouse-ear cress).